The following is a 38-amino-acid chain: Large ribosomal subunit protein bL36 (38 aa).

It belongs to the bacterial ribosomal protein bL36 family.

The polypeptide is Large ribosomal subunit protein bL36 (Roseiflexus castenholzii (strain DSM 13941 / HLO8)).